Here is a 438-residue protein sequence, read N- to C-terminus: Putative formin-like protein 21a (438 aa).

The tract at residues 1-74 is disordered; that stretch reads MSPVEISGAD…RVLPRPPPPP (74 aa). Over residues 22-61 the composition is skewed to pro residues; that stretch reads PLPPPPPPPPPPMRRRAPLPPPPPPPMRRRAPLPPPPPPA. The FH2 domain maps to 124–438; that stretch reads FPCPSKKKSS…SYGYFDQPWI (315 aa).

This sequence belongs to the formin-like family. Class-II subfamily.

The sequence is that of Putative formin-like protein 21a (FH21A) from Arabidopsis thaliana (Mouse-ear cress).